Here is a 97-residue protein sequence, read N- to C-terminus: Non-pathogenic pore-forming peptide amoebapore A (97 aa).

An N-terminal signal peptide occupies residues 1–20 (MKAIVFVLIFAVAFAVTLRQ). Positions 21–97 (GPIVCNLCTG…NAICAKIHAC (77 aa)) constitute a Saposin B-type domain. 3 disulfide bridges follow: C25/C97, C28/C91, and C55/C66.

Monomer. Homodimer. Hexamer; formed during insertion in the membrane.

The protein localises to the cytoplasmic granule. Its function is as follows. Forms pores in the cell membrane of host cells. Implicated in the cytolytic activity of the parasite. Pore forming activity is lower compared to the activity of ameobapore A from the pathogenic strain HM-1:IMSS. In Entamoeba histolytica, this protein is Non-pathogenic pore-forming peptide amoebapore A.